Here is a 344-residue protein sequence, read N- to C-terminus: Dihydroorotase (344 aa).

Residues His14 and His16 each coordinate Zn(2+). Residues 16–18 and Asn42 contribute to the substrate site; that span reads HLR. Residues Lys100, His137, and His175 each coordinate Zn(2+). Residue Lys100 is modified to N6-carboxylysine. His137 provides a ligand contact to substrate. Leu220 serves as a coordination point for substrate. Asp248 is a Zn(2+) binding site. Asp248 is a catalytic residue. Residues His252 and Ala264 each contribute to the substrate site.

Belongs to the metallo-dependent hydrolases superfamily. DHOase family. Class II DHOase subfamily. In terms of assembly, homodimer. The cofactor is Zn(2+).

The enzyme catalyses (S)-dihydroorotate + H2O = N-carbamoyl-L-aspartate + H(+). Its pathway is pyrimidine metabolism; UMP biosynthesis via de novo pathway; (S)-dihydroorotate from bicarbonate: step 3/3. Its function is as follows. Catalyzes the reversible cyclization of carbamoyl aspartate to dihydroorotate. This is Dihydroorotase from Ralstonia pickettii (strain 12J).